Consider the following 101-residue polypeptide: Small ribosomal subunit protein uS14c (101 aa).

The protein belongs to the universal ribosomal protein uS14 family. Part of the 30S ribosomal subunit.

The protein resides in the plastid. Its function is as follows. Binds 16S rRNA, required for the assembly of 30S particles. This Helicosporidium sp. subsp. Simulium jonesii (Green alga) protein is Small ribosomal subunit protein uS14c.